The following is a 101-amino-acid chain: Large ribosomal subunit protein uL23 (101 aa).

This sequence belongs to the universal ribosomal protein uL23 family. In terms of assembly, part of the 50S ribosomal subunit. Contacts protein L29, and trigger factor when it is bound to the ribosome.

Functionally, one of the early assembly proteins it binds 23S rRNA. One of the proteins that surrounds the polypeptide exit tunnel on the outside of the ribosome. Forms the main docking site for trigger factor binding to the ribosome. The chain is Large ribosomal subunit protein uL23 from Synechocystis sp. (strain ATCC 27184 / PCC 6803 / Kazusa).